Here is a 106-residue protein sequence, read N- to C-terminus: UPF0145 protein CLL_A2504 (106 aa).

The protein belongs to the UPF0145 family.

The polypeptide is UPF0145 protein CLL_A2504 (Clostridium botulinum (strain Eklund 17B / Type B)).